The following is a 673-amino-acid chain: uncharacterized protein (673 aa).

Residues 1–95 (MLNGEKSALG…QSSAIADSIG (95 aa)) form a disordered region. Residues 13-40 (PSNSNSSSKLNAKSPNFIPSSSNIPRSS) show a composition bias toward low complexity. The segment covering 42 to 60 (KTKEHSADRKPHRNSEKKT) has biased composition (basic and acidic residues). The RING-type zinc finger occupies 214–273 (CPFCLEEKPVAARMSRCGHVYCFSCLLRFVETPTAAEVKAAETSGTKIVKCGHRSCPICW). Residues 649–673 (SAPSKNSKNKKKKKLVLLSTGAAHR) are disordered.

It localises to the cytoplasm. The protein resides in the nucleus. This is an uncharacterized protein from Schizosaccharomyces pombe (strain 972 / ATCC 24843) (Fission yeast).